The sequence spans 727 residues: MAAEGLAGLLPAQTQLEYALLDADTPQEKENLVYQYLKKMDSRERDLTVPELSRDLQWLNTEGPISLHKDLCGKVVVLDFFTYCCINCLHLLPDLHELEHQYSDKDGLVIIGVHSAKFPNEKVLDSIKSAVLRYNIVHPVVNDADATLWHELEVSCWPTLVILGPRGNMLFSLVGEGHKEKLFLFTSITLKFYKERGQIKDNSIGIKLYKDSLPPSPLLFPGKVTVDKSGERLVIADTGHHRILVTLKNGQILHTIGGPNSGRKDGRFSEAAFNSPQGVAIKNNVIYVADTENHLIRKIDLELEIVTTVAGIGIQGVDKEGGAKGEEQPISSPWDVVFGNSVSGTQEDDVLWIAMAGIHQVWALMLEGGKLPKGSDLKKGVCLRFAGSGNEENRNNAYPHKAGFAQPSGLSLASEEPWNCLFVADSESSTVRMISLKDGAVKHLVGGERDPLNLFAFGDVDGAGINAKLQHPLGITWDKKRKLLYVADSYNHKIKVVDPKMKNCATLAGTGEASNVVGSSFTQSTFNEPGGLCIEENGRLVYVADTNNHQIKVLDLETKILSMLPILNPETCDVTDNLSVQKDQIANLPKLPKSAPNIQLPSLSAAPGQTIQFLLKLTLPPDSKLNEEAPNAWFITAEDNNTWLLQGQCLSGEIKDVSCQTVIPFQLPRVCLSAEAVLAIKACLYYCSKDSSACMMKGISFNQPLQIGSTNQGRLTQVELTHSFITN.

A Thioredoxin domain is found at 43-198 (RERDLTVPEL…TLKFYKERGQ (156 aa)). NHL repeat units follow at residues 207-249 (KLYK…TLKN), 260-302 (NSGR…IDLE), 330-364 (ISSP…VWAL), 404-434 (FAQP…VRMI), 456-500 (AFGD…VDPK), and 513-557 (ASNV…LDLE).

Monomer.

Its subcellular location is the cytoplasm. It is found in the cytosol. In terms of biological role, required for normal embryonic development. This chain is NHL repeat-containing protein 2 (NHLRC2), found in Gallus gallus (Chicken).